A 410-amino-acid chain; its full sequence is Multifunctional CCA protein (410 aa).

G8 and R11 together coordinate ATP. Residues G8 and R11 each coordinate CTP. Mg(2+) contacts are provided by E21 and D23. Positions 91, 137, and 140 each coordinate ATP. R91, R137, and R140 together coordinate CTP. The region spanning 228 to 329 is the HD domain; it reads TGIHVMMALR…LKLFDRLDVW (102 aa).

It belongs to the tRNA nucleotidyltransferase/poly(A) polymerase family. Bacterial CCA-adding enzyme type 1 subfamily. Monomer. Can also form homodimers and oligomers. Requires Mg(2+) as cofactor. It depends on Ni(2+) as a cofactor.

It carries out the reaction a tRNA precursor + 2 CTP + ATP = a tRNA with a 3' CCA end + 3 diphosphate. The enzyme catalyses a tRNA with a 3' CCA end + 2 CTP + ATP = a tRNA with a 3' CCACCA end + 3 diphosphate. Functionally, catalyzes the addition and repair of the essential 3'-terminal CCA sequence in tRNAs without using a nucleic acid template. Adds these three nucleotides in the order of C, C, and A to the tRNA nucleotide-73, using CTP and ATP as substrates and producing inorganic pyrophosphate. tRNA 3'-terminal CCA addition is required both for tRNA processing and repair. Also involved in tRNA surveillance by mediating tandem CCA addition to generate a CCACCA at the 3' terminus of unstable tRNAs. While stable tRNAs receive only 3'-terminal CCA, unstable tRNAs are marked with CCACCA and rapidly degraded. In Tolumonas auensis (strain DSM 9187 / NBRC 110442 / TA 4), this protein is Multifunctional CCA protein.